We begin with the raw amino-acid sequence, 177 residues long: Bifunctional protein PyrR (177 aa).

A PRPP-binding motif is present at residues 97–109; it reads IILVDDVLYTGRT.

It belongs to the purine/pyrimidine phosphoribosyltransferase family. PyrR subfamily.

It carries out the reaction UMP + diphosphate = 5-phospho-alpha-D-ribose 1-diphosphate + uracil. Its function is as follows. Regulates the transcription of the pyrimidine nucleotide (pyr) operon in response to exogenous pyrimidines. Functionally, also displays a weak uracil phosphoribosyltransferase activity which is not physiologically significant. This Nitrosococcus oceani (strain ATCC 19707 / BCRC 17464 / JCM 30415 / NCIMB 11848 / C-107) protein is Bifunctional protein PyrR.